Here is a 449-residue protein sequence, read N- to C-terminus: MGNKPTIAISHLGCEKNRIDSEHMLGLLAEAGYQIDGNEELADYVIVNTCSFIQEARQESVRTLVELAEANKKIIISGCMAQHFQEELLEELPEAVAIVGTGDYQTIVDVVQRVENGERVKAISTTPTFIADESIPRYRTTTEGVAYLRVAEGCDYRCAFCIIPHLRGNQRSRSIESIVTEAQQLADQGVQELILISQITTNYGLDLYGEPKLAELLRELGKVDIPWVRIHYAYPTGLTSPIIAAIRETPNVLPYLDLPLQHSHPQILKTMNRPWQGQVNDSIIERIKEAIPEAVLRTTFIVGFPGETEEHFDHLVNFVQRHEFDHVGVFTFSAEEETPAYQMSPQVPPDIAQERRNLLMEVQQPISIKKNQNCIGQTVPVLIEQENPQTGQLIGRSPRFAPEVDGLVYVQGEAPLNTIVPVQITHADVYDLYGKTNLKNDTAFGETLN.

Residues 5–116 enclose the MTTase N-terminal domain; the sequence is PTIAISHLGC…IVDVVQRVEN (112 aa). [4Fe-4S] cluster is bound by residues Cys14, Cys50, Cys79, Cys154, Cys158, and Cys161. A Radical SAM core domain is found at 140-369; it reads TTTEGVAYLR…MEVQQPISIK (230 aa). Residues 372–438 form the TRAM domain; that stretch reads QNCIGQTVPV…VYDLYGKTNL (67 aa).

It belongs to the methylthiotransferase family. RimO subfamily. [4Fe-4S] cluster serves as cofactor.

It localises to the cytoplasm. It carries out the reaction L-aspartate(89)-[ribosomal protein uS12]-hydrogen + (sulfur carrier)-SH + AH2 + 2 S-adenosyl-L-methionine = 3-methylsulfanyl-L-aspartate(89)-[ribosomal protein uS12]-hydrogen + (sulfur carrier)-H + 5'-deoxyadenosine + L-methionine + A + S-adenosyl-L-homocysteine + 2 H(+). Catalyzes the methylthiolation of an aspartic acid residue of ribosomal protein uS12. The polypeptide is Ribosomal protein uS12 methylthiotransferase RimO (Rippkaea orientalis (strain PCC 8801 / RF-1) (Cyanothece sp. (strain PCC 8801))).